The following is a 226-amino-acid chain: 7-cyano-7-deazaguanine synthase (226 aa).

Residue 7 to 17 (LSGGMDSLVTT) coordinates ATP. Cys-187, Cys-195, Cys-198, and Cys-201 together coordinate Zn(2+).

Belongs to the QueC family. Zn(2+) is required as a cofactor.

It catalyses the reaction 7-carboxy-7-deazaguanine + NH4(+) + ATP = 7-cyano-7-deazaguanine + ADP + phosphate + H2O + H(+). It participates in purine metabolism; 7-cyano-7-deazaguanine biosynthesis. Its function is as follows. Catalyzes the ATP-dependent conversion of 7-carboxy-7-deazaguanine (CDG) to 7-cyano-7-deazaguanine (preQ(0)). The protein is 7-cyano-7-deazaguanine synthase of Chloroherpeton thalassium (strain ATCC 35110 / GB-78).